Reading from the N-terminus, the 68-residue chain is Palustrin-1c (68 aa).

Positions 1–22 are cleaved as a signal peptide; the sequence is MFTTKKSLLLLFFLGTISLSLC. The propeptide occupies 23-39; that stretch reads EEERGADEEEGDGEKLT. C62 and C68 form a disulfide bridge.

In terms of tissue distribution, expressed by the skin glands.

It is found in the secreted. Its function is as follows. Antimicrobial activity against Gram-negative bacterium E.coli. Stimulates insulin release. The protein is Palustrin-1c of Lithobates palustris (Pickerel frog).